The chain runs to 512 residues: ATP synthase subunit alpha (512 aa).

Residue 169–176 participates in ATP binding; it reads GDRQTGKT.

It belongs to the ATPase alpha/beta chains family. In terms of assembly, F-type ATPases have 2 components, CF(1) - the catalytic core - and CF(0) - the membrane proton channel. CF(1) has five subunits: alpha(3), beta(3), gamma(1), delta(1), epsilon(1). CF(0) has three main subunits: a(1), b(2) and c(9-12). The alpha and beta chains form an alternating ring which encloses part of the gamma chain. CF(1) is attached to CF(0) by a central stalk formed by the gamma and epsilon chains, while a peripheral stalk is formed by the delta and b chains.

It is found in the cell membrane. The enzyme catalyses ATP + H2O + 4 H(+)(in) = ADP + phosphate + 5 H(+)(out). Functionally, produces ATP from ADP in the presence of a proton gradient across the membrane. The alpha chain is a regulatory subunit. In Elusimicrobium minutum (strain Pei191), this protein is ATP synthase subunit alpha.